We begin with the raw amino-acid sequence, 212 residues long: Uracil phosphoribosyltransferase (212 aa).

5-phospho-alpha-D-ribose 1-diphosphate contacts are provided by residues Arg78, Arg103, and Asp130–Ser138. Residues Ile193 and Gly198 to Ala200 each bind uracil. Asp199 is a 5-phospho-alpha-D-ribose 1-diphosphate binding site.

Belongs to the UPRTase family. Mg(2+) serves as cofactor.

It carries out the reaction UMP + diphosphate = 5-phospho-alpha-D-ribose 1-diphosphate + uracil. It participates in pyrimidine metabolism; UMP biosynthesis via salvage pathway; UMP from uracil: step 1/1. With respect to regulation, allosterically activated by GTP. Functionally, catalyzes the conversion of uracil and 5-phospho-alpha-D-ribose 1-diphosphate (PRPP) to UMP and diphosphate. The protein is Uracil phosphoribosyltransferase of Pseudomonas syringae pv. tomato (strain ATCC BAA-871 / DC3000).